A 1055-amino-acid chain; its full sequence is Error-prone DNA polymerase (1055 aa).

This sequence belongs to the DNA polymerase type-C family. DnaE2 subfamily.

The protein localises to the cytoplasm. It carries out the reaction DNA(n) + a 2'-deoxyribonucleoside 5'-triphosphate = DNA(n+1) + diphosphate. Functionally, DNA polymerase involved in damage-induced mutagenesis and translesion synthesis (TLS). It is not the major replicative DNA polymerase. This Corynebacterium glutamicum (strain ATCC 13032 / DSM 20300 / JCM 1318 / BCRC 11384 / CCUG 27702 / LMG 3730 / NBRC 12168 / NCIMB 10025 / NRRL B-2784 / 534) protein is Error-prone DNA polymerase.